We begin with the raw amino-acid sequence, 130 residues long: Small ribosomal subunit protein uS9 (130 aa).

The protein belongs to the universal ribosomal protein uS9 family.

The sequence is that of Small ribosomal subunit protein uS9 from Nitrosomonas eutropha (strain DSM 101675 / C91 / Nm57).